The following is a 147-amino-acid chain: MRIPVIRSPLEIRDTERKGRGVFALEPIPAQTCIEISPVLMFSKEEYEQHGQYTVLNEYTYVWSEGKQGLALGLGSMFNHDRHPNVYWKKDNRNNYISYYTLREIKTNEELCISYGDHLWFEDEASSASRISPNEENEDFPLQNISL.

The 109-residue stretch at 8–116 (SPLEIRDTER…TNEELCISYG (109 aa)) folds into the SET domain.

It belongs to the class V-like SAM-binding methyltransferase superfamily. In terms of assembly, homodimer.

The protein localises to the cytoplasm. It localises to the nucleus. The enzyme catalyses L-lysyl(37)-[histone H3] + S-adenosyl-L-methionine = N(6)-methyl-L-lysyl(37)-[histone H3] + S-adenosyl-L-homocysteine + H(+). The catalysed reaction is N(6)-methyl-L-lysyl(37)-[histone H3] + S-adenosyl-L-methionine = N(6),N(6)-dimethyl-L-lysyl(37)-[histone H3] + S-adenosyl-L-homocysteine + H(+). It carries out the reaction N(6),N(6)-dimethyl-L-lysyl(37)-[histone H3] + S-adenosyl-L-methionine = N(6),N(6),N(6)-trimethyl-L-lysyl(37)-[histone H3] + S-adenosyl-L-homocysteine + H(+). Its function is as follows. Histone lysine methyltransferase that specifically mono-, di-, and trimethylates 'Lys-37' of histone H3 to regulate sporulation. This chain is Histone-lysine N-methyltransferase, H3 lysine-37 specific, found in Schizosaccharomyces pombe (strain 972 / ATCC 24843) (Fission yeast).